The following is a 297-amino-acid chain: Ribosomal protein L11 methyltransferase (297 aa).

Positions 152, 173, 195, and 234 each coordinate S-adenosyl-L-methionine.

The protein belongs to the methyltransferase superfamily. PrmA family.

The protein localises to the cytoplasm. The enzyme catalyses L-lysyl-[protein] + 3 S-adenosyl-L-methionine = N(6),N(6),N(6)-trimethyl-L-lysyl-[protein] + 3 S-adenosyl-L-homocysteine + 3 H(+). Functionally, methylates ribosomal protein L11. The protein is Ribosomal protein L11 methyltransferase of Cupriavidus pinatubonensis (strain JMP 134 / LMG 1197) (Cupriavidus necator (strain JMP 134)).